The sequence spans 495 residues: Putative aldehyde dehydrogenase AldA (495 aa).

Residue 212 to 218 (GKGSESG) coordinates NAD(+). Active-site residues include Glu-256 and Cys-290.

It belongs to the aldehyde dehydrogenase family.

It catalyses the reaction an aldehyde + NAD(+) + H2O = a carboxylate + NADH + 2 H(+). This chain is Putative aldehyde dehydrogenase AldA (aldA), found in Staphylococcus aureus (strain MSSA476).